A 292-amino-acid polypeptide reads, in one-letter code: 11-beta-hydroxysteroid dehydrogenase 1 (292 aa).

The Cytoplasmic segment spans residues 1 to 7 (MAFMKKY). A helical; Signal-anchor for type II membrane protein membrane pass occupies residues 8-24 (LLPILGLFMAYYYYSAN). The Lumenal portion of the chain corresponds to 25 to 292 (EEFRPEMLQG…SYNMDRFINK (268 aa)). NADP(+)-binding positions include 41-67 (GASK…TARS), 92-93 (TM), and 119-121 (NHI). Asn123 and Asn162 each carry an N-linked (GlcNAc...) asparagine glycan. Residue Ser170 coordinates substrate. The Proton acceptor role is filled by Tyr183. 183 to 187 (YSASK) is an NADP(+) binding site. N-linked (GlcNAc...) asparagine glycosylation is present at Asn207. 218-222 (IDTET) contacts NADP(+).

This sequence belongs to the short-chain dehydrogenases/reductases (SDR) family. Homodimer. Glycosylated. In terms of tissue distribution, widely expressed, highest expression in liver, lower in testis, ovary, lung, foreskin fibroblasts, and much lower in kidney. Expressed in liver (at protein level). Expressed in the basal cells of the corneal epithelium and in the ciliary nonpigmented epithelium (both at mRNA and at protein level).

It localises to the endoplasmic reticulum membrane. The catalysed reaction is an 11beta-hydroxysteroid + NADP(+) = an 11-oxosteroid + NADPH + H(+). It carries out the reaction cortisone + NADPH + H(+) = cortisol + NADP(+). The enzyme catalyses corticosterone + NADP(+) = 11-dehydrocorticosterone + NADPH + H(+). It catalyses the reaction a 7beta-hydroxysteroid + NADP(+) = a 7-oxosteroid + NADPH + H(+). The catalysed reaction is 7-oxocholesterol + NADPH + H(+) = 7beta-hydroxycholesterol + NADP(+). It carries out the reaction chenodeoxycholate + NADP(+) = 7-oxolithocholate + NADPH + H(+). The enzyme catalyses 7-oxolithocholate + NADPH + H(+) = ursodeoxycholate + NADP(+). It catalyses the reaction glycochenodeoxycholate + NADP(+) = 7-oxoglycolithocholate + NADPH + H(+). The catalysed reaction is taurochenodeoxycholate + NADP(+) = 7-oxotaurolithocholate + NADPH + H(+). It carries out the reaction tauroursodeoxycholate + NADP(+) = 7-oxotaurolithocholate + NADPH + H(+). The enzyme catalyses glycoursodeoxycholate + NADP(+) = 7-oxoglycolithocholate + NADPH + H(+). It catalyses the reaction 7-oxopregnenolone + NADPH + H(+) = 7beta-hydroxypregnenolone + NADP(+). The catalysed reaction is 3beta,7alpha-dihydroxyandrost-5-en-17-one + NADP(+) = 3beta-hydroxy-5-androstene-7,17-dione + NADPH + H(+). It carries out the reaction 3beta-hydroxy-5-androstene-7,17-dione + NADPH + H(+) = 3beta,7beta-dihydroxyandrost-5-en-17-one + NADP(+). The enzyme catalyses 3beta-hydroxy-5alpha-androstane-7,17-dione + NADPH + H(+) = 3beta,7beta-dihydroxy-5alpha-androstan-17-one + NADP(+). Its pathway is steroid metabolism. Its activity is regulated as follows. Hexose-6-phosphate dehydrogenase (H6PD) provides cosubstrate NADPH, and the glucose-6-phosphate transporter in the ER-membrane supplies the substrate for H6PDH, their activities stimulate the reduction of cortisone and abolish the oxidation of cortisol. Its function is as follows. Controls the reversible conversion of biologically active glucocorticoids such as cortisone to cortisol, and 11-dehydrocorticosterone to corticosterone in the presence of NADP(H). Participates in the corticosteroid receptor-mediated anti-inflammatory response, as well as metabolic and homeostatic processes. Plays a role in the secretion of aqueous humor in the eye, maintaining a normotensive, intraocular environment. Bidirectional in vitro, predominantly functions as a reductase in vivo, thereby increasing the concentration of active glucocorticoids. It has broad substrate specificity, besides glucocorticoids, it accepts other steroid and sterol substrates. Interconverts 7-oxo- and 7-hydroxy-neurosteroids such as 7-oxopregnenolone and 7beta-hydroxypregnenolone, 7-oxodehydroepiandrosterone (3beta-hydroxy-5-androstene-7,17-dione) and 7beta-hydroxydehydroepiandrosterone (3beta,7beta-dihydroxyandrost-5-en-17-one), among others. Catalyzes the stereo-specific conversion of the major dietary oxysterol, 7-ketocholesterol (7-oxocholesterol), into the more polar 7-beta-hydroxycholesterol metabolite. 7-oxocholesterol is one of the most important oxysterols, it participates in several events such as induction of apoptosis, accumulation in atherosclerotic lesions, lipid peroxidation, and induction of foam cell formation. Mediates the 7-oxo reduction of 7-oxolithocholate mainly to chenodeoxycholate, and to a lesser extent to ursodeoxycholate, both in its free form and when conjugated to glycine or taurine, providing a link between glucocorticoid activation and bile acid metabolism. Catalyzes the synthesis of 7-beta-25-dihydroxycholesterol from 7-oxo-25-hydroxycholesterol in vitro, which acts as a ligand for the G-protein-coupled receptor (GPCR) Epstein-Barr virus-induced gene 2 (EBI2) and may thereby regulate immune cell migration. This is 11-beta-hydroxysteroid dehydrogenase 1 from Homo sapiens (Human).